A 920-amino-acid chain; its full sequence is Neurofibromin-A (920 aa).

The Ras-GAP domain occupies 63 to 291; the sequence is NKTLPLIKDL…EKMSAYFNLI (229 aa). 2 disordered regions span residues 344–405 and 477–508; these read KWLA…TTTA and LGPS…GASM. Residues 346–369 are compositionally biased toward polar residues; the sequence is LATTPSGNTPSPAISNASSAHNGK. Positions 370–405 are enriched in low complexity; sequence SNNTTNNNNNNNNNNNNNNNNNNNNNNNSNKTTTTA. Positions 498-507 are enriched in polar residues; that stretch reads PTTSLQNGAS. A CRAL-TRIO domain is found at 512–673; that stretch reads FDECTHMLER…TSKDFITKSY (162 aa).

Regulator of the GTPase activity of Ras, mainly RasG and RasB. In Dictyostelium discoideum (Social amoeba), this protein is Neurofibromin-A (nfaA).